The sequence spans 939 residues: Isoleucine--tRNA ligase (939 aa).

The 'HIGH' region motif lies at P58–H68. E574 serves as a coordination point for L-isoleucyl-5'-AMP. Residues K615–S619 carry the 'KMSKS' region motif. K618 is a binding site for ATP. Residues C902, C905, C922, and C925 each coordinate Zn(2+).

This sequence belongs to the class-I aminoacyl-tRNA synthetase family. IleS type 1 subfamily. As to quaternary structure, monomer. Requires Zn(2+) as cofactor.

Its subcellular location is the cytoplasm. The enzyme catalyses tRNA(Ile) + L-isoleucine + ATP = L-isoleucyl-tRNA(Ile) + AMP + diphosphate. Functionally, catalyzes the attachment of isoleucine to tRNA(Ile). As IleRS can inadvertently accommodate and process structurally similar amino acids such as valine, to avoid such errors it has two additional distinct tRNA(Ile)-dependent editing activities. One activity is designated as 'pretransfer' editing and involves the hydrolysis of activated Val-AMP. The other activity is designated 'posttransfer' editing and involves deacylation of mischarged Val-tRNA(Ile). This chain is Isoleucine--tRNA ligase, found in Aromatoleum aromaticum (strain DSM 19018 / LMG 30748 / EbN1) (Azoarcus sp. (strain EbN1)).